We begin with the raw amino-acid sequence, 419 residues long: Acyl-coenzyme A thioesterase 1 (419 aa).

Catalysis depends on charge relay system residues Ser-232, Asp-324, and His-358. Ser-416 carries the phosphoserine modification.

This sequence belongs to the C/M/P thioester hydrolase family. As to quaternary structure, monomer. In terms of tissue distribution, expressed in heart, kidney, brown adipose tissue, white adipose tissue, adrenal gland and muscle.

The protein resides in the cytoplasm. The protein localises to the cytosol. The catalysed reaction is hexadecanoyl-CoA + H2O = hexadecanoate + CoA + H(+). The enzyme catalyses decanoyl-CoA + H2O = decanoate + CoA + H(+). It catalyses the reaction dodecanoyl-CoA + H2O = dodecanoate + CoA + H(+). It carries out the reaction tetradecanoyl-CoA + H2O = tetradecanoate + CoA + H(+). The catalysed reaction is octadecanoyl-CoA + H2O = octadecanoate + CoA + H(+). The enzyme catalyses eicosanoyl-CoA + H2O = eicosanoate + CoA + H(+). It catalyses the reaction (9Z)-octadecenoyl-CoA + H2O = (9Z)-octadecenoate + CoA + H(+). It carries out the reaction (9Z)-hexadecenoyl-CoA + H2O = (9Z)-hexadecenoate + CoA + H(+). The catalysed reaction is (9E)-octadecenoyl-CoA + H2O = (9E)-octadecenoate + CoA + H(+). It functions in the pathway lipid metabolism; fatty acid metabolism. Catalyzes the hydrolysis of acyl-CoAs into free fatty acids and coenzyme A (CoASH), regulating their respective intracellular levels. More active towards saturated and unsaturated long chain fatty acyl-CoAs (C12-C20). This Mus musculus (Mouse) protein is Acyl-coenzyme A thioesterase 1 (Acot1).